The sequence spans 563 residues: Pyruvate decarboxylase isozyme 2 (563 aa).

Residues D28, H115, Y157, and R224 each coordinate pyruvate. Thiamine diphosphate-binding positions include T390 and 413–415 (GSI). D444 is a Mg(2+) binding site. Thiamine diphosphate contacts are provided by residues 445-446 (GS) and 471-476 (NNGYTI). N471 and G473 together coordinate Mg(2+). E477 serves as a coordination point for pyruvate.

The protein belongs to the TPP enzyme family. As to quaternary structure, homotetramer. It depends on Mg(2+) as a cofactor. The cofactor is thiamine diphosphate.

The protein localises to the cytoplasm. Its subcellular location is the nucleus. It carries out the reaction pyruvate + H(+) = acetaldehyde + CO2. The catalysed reaction is 3-methyl-2-oxobutanoate + H(+) = 2-methylpropanal + CO2. It catalyses the reaction (S)-3-methyl-2-oxopentanoate + H(+) = 2-methylbutanal + CO2. The enzyme catalyses indole-3-pyruvate + H(+) = indole-3-acetaldehyde + CO2. It carries out the reaction 3-phenylpyruvate + H(+) = 2-phenylacetaldehyde + CO2. The catalysed reaction is 2-oxobutanoate + H(+) = propanal + CO2. It catalyses the reaction 2-oxopentanoate + H(+) = butanal + CO2. The enzyme catalyses 2 acetaldehyde = acetoin. It carries out the reaction acetaldehyde + pyruvate + H(+) = acetoin + CO2. It functions in the pathway fermentation; ethanol fermentation. Its pathway is amino-acid degradation; Ehrlich pathway. Allosterically activated by its substrate, pyruvate. Functionally, second most abundant of three pyruvate decarboxylases (PDC1, PDC5, PDC6) implicated in the nonoxidative conversion of pyruvate to acetaldehyde and carbon dioxide during alcoholic fermentation. Most of the produced acetaldehyde is subsequently reduced to ethanol, but some is required for cytosolic acetyl-CoA production for biosynthetic pathways. The enzyme is also one of five 2-oxo acid decarboxylases (PDC1, PDC5, PDC6, ARO10, and THI3) able to decarboxylate more complex 2-oxo acids (alpha-keto-acids) than pyruvate, which seem mainly involved in amino acid catabolism. Here the enzyme catalyzes the decarboxylation of amino acids, which, in a first step, have been transaminated to the corresponding 2-oxo acids. In a third step, the resulting aldehydes are reduced to alcohols, collectively referred to as fusel oils or alcohols. Its preferred substrates are the transaminated amino acids derived from threonine (2-oxobutanoate), norvaline (2-oxopentanoate), valine (3-methyl-2-oxobutanoate, also alpha-keto-isovalerate), isoleucine ((3S)-3-methyl-2-oxopentanoate, also alpha-keto-beta-methylvalerate), phenylalanine (phenylpyruvate), and tryptophan (3-(indol-3-yl)pyruvate), whereas transaminated leucine is no substrate. In a side-reaction the carbanionic intermediate (or active aldehyde) generated by decarboxylation or by activation of an aldehyde can react with an aldehyde via condensation (or carboligation) yielding a 2-hydroxy ketone, collectively called acyloins. The chain is Pyruvate decarboxylase isozyme 2 (PDC5) from Saccharomyces cerevisiae (strain ATCC 204508 / S288c) (Baker's yeast).